The sequence spans 563 residues: Arginine--tRNA ligase (563 aa).

A 'HIGH' region motif is present at residues 121–131; that stretch reads PNIAKPFSIGH.

The protein belongs to the class-I aminoacyl-tRNA synthetase family. Monomer.

It is found in the cytoplasm. The catalysed reaction is tRNA(Arg) + L-arginine + ATP = L-arginyl-tRNA(Arg) + AMP + diphosphate. This Streptococcus pneumoniae (strain ATCC BAA-255 / R6) protein is Arginine--tRNA ligase.